The sequence spans 817 residues: ABC transporter G family member STR (817 aa).

The tract at residues 1–30 (MARLERDGTNKSLESLMDSHKPGGTTTNLN) is disordered. Over 1 to 542 (MARLERDGTN…RTVLNVIRTP (542 aa)) the chain is Cytoplasmic. Residues 43–294 (LEFTNLSYSI…LSGFGRPVPD (252 aa)) form the ABC transporter domain. 87–94 (GPSGAGKS) is a binding site for ATP. Disordered stretches follow at residues 321 to 349 (QYQH…RRNT), 362 to 395 (GFTA…LERR), and 439 to 463 (RPPS…GPRS). The segment covering 362-375 (GFTAGTPQPDSSQF) has biased composition (polar residues). The segment covering 377–388 (LDDDDNDDDENF) has biased composition (acidic residues). The chain crosses the membrane as a helical span at residues 543-563 (ELFASREIVLTVMALVLSTIF). Over 564–579 (KNLGDTTFIDINRLLN) the chain is Extracellular. A helical transmembrane segment spans residues 580-600 (FYIFAVCLVFFSSNDAVPSFI). The Cytoplasmic portion of the chain corresponds to 601-621 (MERFIFIRETSHNAYRASSYV). A helical transmembrane segment spans residues 622 to 642 (ISSLIVYLPFFAVQGLTFAVI). At 643–657 (TKLMLHLKSNLFNFW) the chain is on the extracellular side. Residues 658 to 678 (MILFASLITTNAYVMLVSALV) form a helical membrane-spanning segment. Topologically, residues 679–681 (PSY) are cytoplasmic. The helical transmembrane segment at 682–702 (ITGYAVVIATTALFFLTCGFF) threads the bilayer. Residues 703–787 (LKRTQIPAYW…TMDITMESLW (85 aa)) lie on the Extracellular side of the membrane. An N-linked (GlcNAc...) asparagine glycan is attached at asparagine 762. A helical transmembrane segment spans residues 788 to 808 (YDILILLAWGVLYRFFFYLVL). Topologically, residues 809–817 (RFYSKNERK) are cytoplasmic.

This sequence belongs to the ABC transporter superfamily. ABCG family. Stunted arbuscule (STR) subfamily. In terms of assembly, heterodimerizes with STR2; the resulting transporter is located in the peri-arbuscular membrane. As to expression, expressed constitutively in the vascular tissue of roots.

It is found in the cell membrane. Functionally, together with STR2, required for arbuscule development in arbuscular mycorrhizal (AM) symbiosis. The sequence is that of ABC transporter G family member STR from Medicago truncatula (Barrel medic).